Consider the following 286-residue polypeptide: Probable biotin transporter (286 aa).

EamA domains lie at 3-128 (YLLF…AIIR) and 139-277 (GFLL…LWVN). A run of 10 helical transmembrane segments spans residues 4-24 (LLFVTVLWAFSFNLIGEYLAG), 26-46 (VDSYFAVLTRVLLAGLVFLPL), 56-76 (FVGGVMLVGALQFGITYVCLY), 81-101 (VLTVPEVLLFTVLTPVHVALF), 109-129 (FNFWALAAALVAVLGAAIIRY), 136-156 (FLQGFLLLQLANATFAAGQVL), 174-194 (FGYFFVGALLVALPAWLLFGD), 203-223 (LQWGVLVWMGLLATALGQFWW), 234-254 (TLAVMNNLHVPVGLLLNLLIW), and 258-280 (ADLPRLALGGAVIVASLWVNRLG).

The protein belongs to the drug/metabolite transporter (DMT) superfamily. 10 TMS drug/metabolite exporter (DME) (TC 2.A.7.3) family.

It localises to the cell inner membrane. The enzyme catalyses biotin(in) = biotin(out). Its function is as follows. Uptake of biotin. This Pseudomonas aeruginosa (strain ATCC 15692 / DSM 22644 / CIP 104116 / JCM 14847 / LMG 12228 / 1C / PRS 101 / PAO1) protein is Probable biotin transporter.